Consider the following 106-residue polypeptide: Large ribosomal subunit protein uL24 (106 aa).

This sequence belongs to the universal ribosomal protein uL24 family. Part of the 50S ribosomal subunit.

Functionally, one of two assembly initiator proteins, it binds directly to the 5'-end of the 23S rRNA, where it nucleates assembly of the 50S subunit. Its function is as follows. One of the proteins that surrounds the polypeptide exit tunnel on the outside of the subunit. This is Large ribosomal subunit protein uL24 from Gluconobacter oxydans (strain 621H) (Gluconobacter suboxydans).